A 417-amino-acid chain; its full sequence is DNA primase small subunit (417 aa).

Met1 carries the N-acetylmethionine modification. Residues Glu44, Asp109, and Asp111 contribute to the active site. Positions 109 and 111 each coordinate Mg(2+). Mn(2+) contacts are provided by Asp109 and Asp111. 109 to 111 (DID) contacts a ribonucleoside 5'-triphosphate. Cys121, Cys122, Cys128, and Cys131 together coordinate Zn(2+). Residues 121-131 (CCSSADICSKC) carry the Zinc knuckle motif motif. A ribonucleoside 5'-triphosphate is bound at residue 160-166 (SGRRGVH). Position 305 (Asp305) interacts with Mg(2+). Asp305 provides a ligand contact to Mn(2+). A ribonucleoside 5'-triphosphate is bound by residues 314–317 (HLLK) and His323.

Belongs to the eukaryotic-type primase small subunit family. Heterodimer of a catalytic subunit PRIM1 and a regulatory subunit PRIM2, also known as the DNA primase complex. Interacts with PRIM2/p58 (via C-terminus). Component of the alpha DNA polymerase complex (also known as the alpha DNA polymerase-primase complex) consisting of four subunits: the catalytic subunit POLA1, the regulatory subunit POLA2, and the primase complex subunits PRIM1 and PRIM2 respectively. Within the complex, POLA1 directly interacts with PRIM2. Mg(2+) is required as a cofactor. Mn(2+) serves as cofactor.

It catalyses the reaction ssDNA + n NTP = ssDNA/pppN(pN)n-1 hybrid + (n-1) diphosphate.. The presence of the regulatory subunit PRIM2/p58 accelerates the kinetics of initiation and primer extension. Its function is as follows. Catalytic subunit of the DNA primase complex and component of the DNA polymerase alpha complex (also known as the alpha DNA polymerase-primase complex) which play an essential role in the initiation of DNA synthesis. During the S phase of the cell cycle, the DNA polymerase alpha complex (composed of a catalytic subunit POLA1, an accessory subunit POLA2 and two primase subunits, the catalytic subunit PRIM1 and the regulatory subunit PRIM2) is recruited to DNA at the replicative forks via direct interactions with MCM10 and WDHD1. The primase subunit of the polymerase alpha complex initiates DNA synthesis by oligomerising short RNA primers on both leading and lagging strands. These primers are initially extended by the polymerase alpha catalytic subunit and subsequently transferred to polymerase delta and polymerase epsilon for processive synthesis on the lagging and leading strand, respectively. In the primase complex, both subunits are necessary for the initial di-nucleotide formation, but the extension of the primer depends only on the catalytic subunit. Can add both ribo- and deoxynucleotides during elongation of the primers. Synthesizes 9-mer RNA primers (also known as the 'unit length' RNA primers). Incorporates only ribonucleotides in the presence of ribo- and deoxy-nucleotide triphosphates (rNTPs, dNTPs). Requires template thymine or cytidine to start the RNA primer synthesis, with an adenine or guanine at its 5'-end. Binds single stranded DNA. This Mus musculus (Mouse) protein is DNA primase small subunit (Prim1).